The chain runs to 125 residues: Large ribosomal subunit protein eL31 (125 aa).

The protein belongs to the eukaryotic ribosomal protein eL31 family. Component of the large ribosomal subunit.

The protein resides in the cytoplasm. Its function is as follows. Component of the large ribosomal subunit. The ribosome is a large ribonucleoprotein complex responsible for the synthesis of proteins in the cell. The polypeptide is Large ribosomal subunit protein eL31 (rpl31) (Xenopus laevis (African clawed frog)).